The chain runs to 164 residues: Lipoprotein signal peptidase (164 aa).

3 helical membrane passes run 12–32 (FLWL…WIVA), 70–90 (WLFT…LKET), and 93–113 (QQVM…GNVF). Active-site residues include D123 and D141. Residues 133 to 153 (YWPAFNVADSAICLGAFLLVI) traverse the membrane as a helical segment.

The protein belongs to the peptidase A8 family.

It localises to the cell inner membrane. The enzyme catalyses Release of signal peptides from bacterial membrane prolipoproteins. Hydrolyzes -Xaa-Yaa-Zaa-|-(S,diacylglyceryl)Cys-, in which Xaa is hydrophobic (preferably Leu), and Yaa (Ala or Ser) and Zaa (Gly or Ala) have small, neutral side chains.. It functions in the pathway protein modification; lipoprotein biosynthesis (signal peptide cleavage). Functionally, this protein specifically catalyzes the removal of signal peptides from prolipoproteins. In Pseudoalteromonas atlantica (strain T6c / ATCC BAA-1087), this protein is Lipoprotein signal peptidase.